The sequence spans 792 residues: E3 UFM1-protein ligase 1 (792 aa).

Residue Ala2 is modified to N-acetylalanine. A mediates interaction with DDRGK1 region spans residues 2 to 200 (ADAWEEIRRL…RGLFSAITRP (199 aa)). Residues 2–212 (ADAWEEIRRL…VNSLISRYGF (211 aa)) form a required for E3 UFM1-protein ligase activity region. The segment at 121 to 250 (DRLAEEVNDK…KAVFIPDIYS (130 aa)) is involved in CDK5RAP3-binding. The segment at 200-400 (PTAVNSLISR…NPVHLITEED (201 aa)) is mediates interaction with TRIP4. Residues 412-471 (TSKKDKKDERRRKATEGSGSVRGGGGSNAREYKIKKTKKKGRKDDDSDDESSHTGKKKPE) form a disordered region. Arg433 bears the Omega-N-methylarginine mark. Over residues 453-471 (RKDDDSDDESSHTGKKKPE) the composition is skewed to basic and acidic residues. The residue at position 458 (Ser458) is a Phosphoserine. The interval 488–682 (LQDAPEEFIS…QLKVTEDPAL (195 aa)) is mediates interaction with CDK5RAP3. At Thr534 the chain carries Phosphothreonine. Residue Ser752 is modified to Phosphoserine.

The protein belongs to the UFL1 family. As to quaternary structure, catalytic component of the UFM1 ribosome E3 ligase (UREL) complex, composed of UFL1, DDRGK1 and CDK5RAP3. Interacts with E2-like enzyme UFC1. Interacts with RELA. Interacts with NBN; promoting recruitment to double-strand breaks following DNA damage. Interacts (when phosphorylated) with YWHAG/14-3-3-gamma; sequestering UFL1 and preventing its association with PDCD1/PD-1 substrate. In terms of processing, ubiquitinated, leading to its degradation by the proteasome. Interaction with CDK5RAP3 protects both proteins against ubiquitination and degradation via the proteasome. Phosphorylation at Thr-534 by AMPK promotes its interaction with YWHAG/14-3-3-gamma, thereby preventing UFL1 association with PDCD1/PD-1 substrate.

The protein resides in the endoplasmic reticulum membrane. It localises to the cytoplasm. It is found in the cytosol. The protein localises to the nucleus. Its subcellular location is the chromosome. Its function is as follows. E3 protein ligase that mediates ufmylation, the covalent attachment of the ubiquitin-like modifier UFM1 to lysine residues on target proteins, and which plays a key role in various processes, such as ribosome recycling, response to DNA damage, interferon response or reticulophagy (also called ER-phagy). Catalyzes ufmylation of many protein, such as CD274/PD-L1, CDK5RAP3, CYB5R3, DDRGK1, EIF6, histone H4, MRE11, P4HB, PDCD1/PD-1, TRIP4, RPN1, RPS20/uS10, RPL10/uL16, RPL26/uL24, SYVN1/HRD1 and TP53/p53. As part of the UREL complex, plays a key role in ribosome recycling by catalyzing mono-ufmylation of RPL26/uL24 subunit of the 60S ribosome. Ufmylation of RPL26/uL24 occurs on free 60S ribosomes following ribosome dissociation: it weakens the junction between post-termination 60S subunits and SEC61 translocons, promoting release and recycling of the large ribosomal subunit from the endoplasmic reticulum membrane. Ufmylation of RPL26/uL24 and subsequent 60S ribosome recycling either take place after normal termination of translation or after ribosome stalling during cotranslational translocation at the endoplasmic reticulum. Involved in reticulophagy in response to endoplasmic reticulum stress by mediating ufmylation of proteins such as CYB5R3 and RPN1, thereby promoting lysosomal degradation of ufmylated proteins. Ufmylation in response to endoplasmic reticulum stress is essential for processes such as hematopoiesis, blood vessel morphogenesis or inflammatory response. Regulates inflammation in response to endoplasmic reticulum stress by promoting reticulophagy, leading to inhibit the activity of the NF-kappa-B transcription factor. Mediates ufmylation of DDRGK1 and CDK5RAP3; the role of these modifications is however unclear: as both DDRGK1 and CDK5RAP3 act as substrate adapters for ufmylation, it is uncertain whether ufmylation of these proteins is, a collateral effect or is required for ufmylation. Acts as a negative regulator of T-cell activation by mediating ufmylation and stabilization of PDCD1/PD-1. Also involved in the response to DNA damage: recruited to double-strand break sites following DNA damage and mediates monoufmylation of histone H4 and ufmylation of MRE11. Mediates ufmylation of TP53/p53, promoting its stability. Catalyzes ufmylation of TRIP4, thereby playing a role in nuclear receptor-mediated transcription. Required for hematopoietic stem cell function and hematopoiesis. In Bos taurus (Bovine), this protein is E3 UFM1-protein ligase 1.